The primary structure comprises 728 residues: Protein Hook homolog 1 (728 aa).

Met1 carries the N-acetylmethionine modification. Residues 1 to 555 are sufficient for interaction with microtubules; sequence MEETQPPPQP…LKQKLEAHME (555 aa). Residues 12 to 128 form the Calponin-homology (CH) domain; it reads LPLCDSLMIW…RLLQLILGCA (117 aa). 2 coiled-coil regions span residues 169–434 and 477–658; these read PNDA…RCSQ and LRLQ…AKFR. The interval 169 to 444 is sufficient for homodimerization, interaction wit HOOK2, HOOK3 and AP4M1; the sequence is PNDAVGELEQ…VQQDHLNQTD (276 aa). Ser235 bears the Phosphoserine mark. The interval 481 to 512 is disordered; that stretch reads QEGSENERIEELQEQLEQKHRKMNELETEQRL. The segment covering 503 to 512 has biased composition (basic and acidic residues); sequence MNELETEQRL. Positions 657–728 are sufficient for interaction with AKTIP and VPS18; it reads FRDYEEKLIV…SVKVPATTSD (72 aa). A Phosphothreonine modification is found at Thr699. Phosphoserine occurs at positions 719 and 727.

This sequence belongs to the hook family. As to quaternary structure, self-associates. Component of the FTS/Hook/FHIP complex (FHF complex), composed of AKTIP/FTS, FHIP1B, and one or more members of the Hook family of proteins HOOK1, HOOK2, and HOOK3. Interacts directly with AKTIP/FTS, HOOK2 and HOOK3. Associates with several subunits of the homotypic vesicular sorting complex (the HOPS complex) including VPS16, VPS18, VPS39 and VPS41; these interactions may be indirect. Interacts with CCDC181. Interacts (via coiled-coil region) with RIMBP3 (via C-terminus). Interacts with LRGUK (via guanylate kinase-like domain). Interacts with microtubules. May interact with CLN3. Interacts with AP4M1; the interaction is direct, mediates the interaction between FTS-Hook-FHIP (FHF) complex and AP-4 and the perinuclear distribution of AP-4.

It localises to the cytoplasm. The protein resides in the cytoskeleton. Its function is as follows. Component of the FTS/Hook/FHIP complex (FHF complex). The FHF complex may function to promote vesicle trafficking and/or fusion via the homotypic vesicular protein sorting complex (the HOPS complex). FHF complex promotes the distribution of AP-4 complex to the perinuclear area of the cell. Required for spermatid differentiation. Probably involved in the positioning of the microtubules of the manchette and the flagellum in relation to the membrane skeleton. This Homo sapiens (Human) protein is Protein Hook homolog 1.